Consider the following 102-residue polypeptide: Large ribosomal subunit protein bL21 (102 aa).

This sequence belongs to the bacterial ribosomal protein bL21 family. In terms of assembly, part of the 50S ribosomal subunit. Contacts protein L20.

Functionally, this protein binds to 23S rRNA in the presence of protein L20. This Levilactobacillus brevis (strain ATCC 367 / BCRC 12310 / CIP 105137 / JCM 1170 / LMG 11437 / NCIMB 947 / NCTC 947) (Lactobacillus brevis) protein is Large ribosomal subunit protein bL21.